The chain runs to 642 residues: Mini-chromosome maintenance complex-binding protein (642 aa).

Over residues 151–161 the composition is skewed to polar residues; that stretch reads ARVSPSTSYTP. The tract at residues 151 to 197 is disordered; it reads ARVSPSTSYTPSRHKRSYEDDDDMDLQPNKQKDQHAGARQAGSVGGL. At Ser-154 the chain carries Phosphoserine. Residue Thr-160 is modified to Phosphothreonine. Ser-167 and Ser-298 each carry phosphoserine.

This sequence belongs to the MCMBP family. As to quaternary structure, interacts with the MCM complex: associates with the MCM3-7 complex which lacks MCM2, while it does not interact with the MCM complex when MCM2 is present (MCM2-7 complex). Interacts with the RPA complex, when composed of all RPA1, RPA2 and RPA3 components, but not with RPA1 or RPA2 alone.

The protein resides in the nucleus. Its function is as follows. Associated component of the MCM complex that acts as a regulator of DNA replication. Binds to the MCM complex during late S phase and promotes the disassembly of the MCM complex from chromatin, thereby acting as a key regulator of pre-replication complex (pre-RC) unloading from replicated DNA. Can dissociate the MCM complex without addition of ATP; probably acts by destabilizing interactions of each individual subunits of the MCM complex. Required for sister chromatid cohesion. The sequence is that of Mini-chromosome maintenance complex-binding protein (MCMBP) from Homo sapiens (Human).